Consider the following 129-residue polypeptide: Phosphoribosyl-AMP cyclohydrolase (129 aa).

A Mg(2+)-binding site is contributed by Asp82. Cys83 is a binding site for Zn(2+). Residues Asp84 and Asp86 each coordinate Mg(2+). 2 residues coordinate Zn(2+): Cys99 and Cys106.

It belongs to the PRA-CH family. Homodimer. Mg(2+) is required as a cofactor. It depends on Zn(2+) as a cofactor.

Its subcellular location is the cytoplasm. It carries out the reaction 1-(5-phospho-beta-D-ribosyl)-5'-AMP + H2O = 1-(5-phospho-beta-D-ribosyl)-5-[(5-phospho-beta-D-ribosylamino)methylideneamino]imidazole-4-carboxamide. The protein operates within amino-acid biosynthesis; L-histidine biosynthesis; L-histidine from 5-phospho-alpha-D-ribose 1-diphosphate: step 3/9. Catalyzes the hydrolysis of the adenine ring of phosphoribosyl-AMP. The polypeptide is Phosphoribosyl-AMP cyclohydrolase (Methanosarcina barkeri (strain Fusaro / DSM 804)).